The following is a 388-amino-acid chain: MNLHEYQGKQLFAEYGLPVSKGYAVDTPEEAAEACDKIGGSEWVVKAQVHAGGRGKAGGVKLVRSKEDAKAFAQQWLGKRLVTYQTDANGQPVTKILVESCTDIAKELYLGAVVDRSSRRIVFMASTEGGVDIEKIAHDTPEKILKATIDPLVGAQPFQGRELAFQLGLEGKQVAQFAKIFVGLAKLFQDHDLALLEVNPLVIKADGDLHCLDAKINIDANAMYRQPKLKTFHDPSQDDPREAHAAKFELNYVALEGNIGCMVNGAGLAMGTMDIVNLHGGKPANFLDVGGGATKERVTEAFKIILSDTNVAAVLVNIFGGIVRCDMIAEGIIGAVKEVGVKIPVVVRLEGNNAELGAKVLAESGLNIIAATSLTDAAQQVVKAAEGK.

Residues 9 to 244 (KQLFAEYGLP…PSQDDPREAH (236 aa)) form the ATP-grasp domain. Residues Lys-46, 53–55 (GRG), Glu-99, Thr-102, and Glu-107 contribute to the ATP site. Residues Asn-199 and Asp-213 each coordinate Mg(2+). Substrate is bound by residues Asn-264 and 321–323 (GIV).

The protein belongs to the succinate/malate CoA ligase beta subunit family. In terms of assembly, heterotetramer of two alpha and two beta subunits. The cofactor is Mg(2+).

It carries out the reaction succinate + ATP + CoA = succinyl-CoA + ADP + phosphate. The catalysed reaction is GTP + succinate + CoA = succinyl-CoA + GDP + phosphate. Its pathway is carbohydrate metabolism; tricarboxylic acid cycle; succinate from succinyl-CoA (ligase route): step 1/1. In terms of biological role, succinyl-CoA synthetase functions in the citric acid cycle (TCA), coupling the hydrolysis of succinyl-CoA to the synthesis of either ATP or GTP and thus represents the only step of substrate-level phosphorylation in the TCA. The beta subunit provides nucleotide specificity of the enzyme and binds the substrate succinate, while the binding sites for coenzyme A and phosphate are found in the alpha subunit. This is Succinate--CoA ligase [ADP-forming] subunit beta from Pseudomonas fluorescens (strain ATCC BAA-477 / NRRL B-23932 / Pf-5).